The following is a 253-amino-acid chain: Ubiquinone/menaquinone biosynthesis C-methyltransferase UbiE (253 aa).

S-adenosyl-L-methionine contacts are provided by residues T76, D97, and 125–126 (NA).

The protein belongs to the class I-like SAM-binding methyltransferase superfamily. MenG/UbiE family.

The catalysed reaction is a 2-demethylmenaquinol + S-adenosyl-L-methionine = a menaquinol + S-adenosyl-L-homocysteine + H(+). It carries out the reaction a 2-methoxy-6-(all-trans-polyprenyl)benzene-1,4-diol + S-adenosyl-L-methionine = a 5-methoxy-2-methyl-3-(all-trans-polyprenyl)benzene-1,4-diol + S-adenosyl-L-homocysteine + H(+). Its pathway is quinol/quinone metabolism; menaquinone biosynthesis; menaquinol from 1,4-dihydroxy-2-naphthoate: step 2/2. It participates in cofactor biosynthesis; ubiquinone biosynthesis. Methyltransferase required for the conversion of demethylmenaquinol (DMKH2) to menaquinol (MKH2) and the conversion of 2-polyprenyl-6-methoxy-1,4-benzoquinol (DDMQH2) to 2-polyprenyl-3-methyl-6-methoxy-1,4-benzoquinol (DMQH2). In Bradyrhizobium sp. (strain BTAi1 / ATCC BAA-1182), this protein is Ubiquinone/menaquinone biosynthesis C-methyltransferase UbiE.